Here is a 1370-residue protein sequence, read N- to C-terminus: Reverse gyrase 1 (1370 aa).

The segment at 6–47 adopts an RG N-terminal-type zinc-finger fold; sequence AASRGVYRYLCPNCGGPNSEERLSRGLPCPRCLPRLPRKGVS. 4 residues coordinate Zn(2+): cysteine 16, cysteine 19, cysteine 34, and cysteine 37. ATP is bound by residues glutamine 95 and 112 to 119; that span reads APTGVGKT. The Helicase ATP-binding domain maps to 99–287; that stretch reads AKRLARGDSF…RKKLLEVKRR (189 aa). The short motif at 220-223 is the DEAD box element; the sequence is DDVD. Residues 643 to 1370 form a topoisomerase I region; that stretch reads ELVRTALLVV…VSRVWGAGVG (728 aa). One can recognise a Toprim domain in the interval 647 to 825; that stretch reads TALLVVESPN…DIKRLEFHEV (179 aa). Residue glutamate 653 coordinates Mg(2+). The RG C-terminal-type zinc-finger motif lies at 744-772; that stretch reads IKRCLDCGYQFVDEASRCPRCGSELIRNS. The Zn(2+) site is built by cysteine 747, cysteine 750, cysteine 761, and cysteine 764. Aspartate 794 serves as a coordination point for Mg(2+). One can recognise a Topo IA-type catalytic domain in the interval 841 to 1323; sequence DDNLVDAQVV…SVFNEISDLA (483 aa). The active-site O-(5'-phospho-DNA)-tyrosine intermediate is the tyrosine 1028.

It in the N-terminal section; belongs to the DEAD box helicase family. DDVD subfamily. This sequence in the C-terminal section; belongs to the type IA topoisomerase family. In terms of assembly, monomer. Requires Zn(2+) as cofactor. Mg(2+) serves as cofactor.

It is found in the cytoplasm. The enzyme catalyses ATP + H2O = ADP + phosphate + H(+). In terms of biological role, modifies the topological state of DNA by introducing positive supercoils in an ATP-dependent process, increasing the linking number in steps of +1. Binds to single-stranded DNA, transiently cleaves and then rejoins the ends, introducing a positive supercoil in the process. The scissile phosphodiester is attacked by the catalytic tyrosine of the enzyme, resulting in the formation of a DNA-(5'-phosphotyrosyl)-enzyme intermediate. Probably involved in rewinding DNA strands in regions of the chromosome that have opened up to allow replication, transcription, DNA repair and/or for DNA protection. The protein is Reverse gyrase 1 of Aeropyrum pernix (strain ATCC 700893 / DSM 11879 / JCM 9820 / NBRC 100138 / K1).